Consider the following 260-residue polypeptide: 3'-5' ssDNA/RNA exonuclease TatD (260 aa).

A divalent metal cation is bound by residues Glu-92, His-128, and His-153.

Belongs to the metallo-dependent hydrolases superfamily. TatD-type hydrolase family. TatD subfamily. Monomer. The cofactor is Mg(2+).

The protein resides in the cytoplasm. Its function is as follows. 3'-5' exonuclease that prefers single-stranded DNA and RNA. May play a role in the H(2)O(2)-induced DNA damage repair. The polypeptide is 3'-5' ssDNA/RNA exonuclease TatD (Edwardsiella piscicida).